Reading from the N-terminus, the 554-residue chain is U3 small nucleolar RNA-associated protein 7 (554 aa).

Positions 1–12 (MGHKKNGHRRQI) are enriched in basic residues. The segment at 1–39 (MGHKKNGHRRQIKERENQNKFERSTYTNNAKNNHTQTKD) is disordered. The span at 13–23 (KERENQNKFER) shows a compositional bias: basic and acidic residues. Residues 24-35 (STYTNNAKNNHT) are compositionally biased toward polar residues. WD repeat units lie at residues 108-149 (LKEF…AELF), 230-269 (TKAGPTMAMAQNPWNAVMHLGHSNGTVSLWSPSMPEPLVK), 272-311 (SARGPVNSIAIDRSGYYMATTGADRSMKIWDIRNFKQLHS), and 314-351 (SLPTPGTNVSISDTGLLALSRGPHVTLWKDALKLSGDS). The tract at residues 475-496 (NKAKTNSDIPDVKPDVKGKNSG) is disordered.

Interacts with snoRNA U3. Interacts with MPP10. Component of the ribosomal small subunit (SSU) processome composed of at least 40 protein subunits and snoRNA U3.

The protein localises to the nucleus. It localises to the nucleolus. Involved in nucleolar processing of pre-18S ribosomal RNA. The polypeptide is U3 small nucleolar RNA-associated protein 7 (UTP7) (Saccharomyces cerevisiae (strain ATCC 204508 / S288c) (Baker's yeast)).